A 205-amino-acid chain; its full sequence is Ribonuclease HII (205 aa).

One can recognise an RNase H type-2 domain in the interval 15 to 205 (SQVCGIDEAG…SFKLRKLGEK (191 aa)). Residues Asp21, Glu22, and Asp117 each coordinate a divalent metal cation.

It belongs to the RNase HII family. Mn(2+) serves as cofactor. It depends on Mg(2+) as a cofactor.

Its subcellular location is the cytoplasm. The catalysed reaction is Endonucleolytic cleavage to 5'-phosphomonoester.. Endonuclease that specifically degrades the RNA of RNA-DNA hybrids. This Chlorobaculum tepidum (strain ATCC 49652 / DSM 12025 / NBRC 103806 / TLS) (Chlorobium tepidum) protein is Ribonuclease HII.